A 345-amino-acid chain; its full sequence is High mobility group protein 20A (345 aa).

2 disordered regions span residues 1 to 130 (MEST…PFPE) and 166 to 206 (QKYQ…EKES). Polar residues-rich tracts occupy residues 22-38 (NNQP…SSQA) and 57-67 (LHQSGEQQLGN). The span at 80-94 (ARRGGWNKGRKRKRS) shows a compositional bias: basic residues. The segment at residues 101–169 (PKAPLTGYVR…RYTKELQKYQ (69 aa)) is a DNA-binding region (HMG box). Positions 112–125 (MNERREQLRTERPD) are enriched in basic and acidic residues. Residues 167–178 (KYQNTDAYQTYS) are compositionally biased toward polar residues. Basic residues predominate over residues 179–189 (RKAKSRQKGRQ). A coiled-coil region spans residues 227-285 (SKAREAELRQLRKSNMEFEERNAALQKHVESMRSAVQRLEAELSQEHERNSLLQQHLQS).

Its subcellular location is the nucleus. Functionally, plays a role in neuronal differentiation. This Xenopus laevis (African clawed frog) protein is High mobility group protein 20A (hmg20a).